Here is a 143-residue protein sequence, read N- to C-terminus: ATP synthase subunit 9, mitochondrial (143 aa).

The N-terminal 62 residues, 1 to 62 (MAASRVFAQR…ARQAFAARRQ (62 aa)), are a transit peptide targeting the mitochondrion. A run of 2 helical transmembrane segments spans residues 85–105 (IGLG…LLAV) and 119–139 (AILG…VAMM).

It belongs to the ATPase C chain family. F-type ATPases have 2 components, CF(1) - the catalytic core - and CF(0) - the membrane proton channel. CF(1) has five subunits: alpha(3), beta(3), gamma(1), delta(1), epsilon(1). CF(0) has three main subunits: a, b and c.

The protein localises to the mitochondrion membrane. Functionally, mitochondrial membrane ATP synthase (F(1)F(0) ATP synthase or Complex V) produces ATP from ADP in the presence of a proton gradient across the membrane which is generated by electron transport complexes of the respiratory chain. F-type ATPases consist of two structural domains, F(1) - containing the extramembraneous catalytic core and F(0) - containing the membrane proton channel, linked together by a central stalk and a peripheral stalk. During catalysis, ATP synthesis in the catalytic domain of F(1) is coupled via a rotary mechanism of the central stalk subunits to proton translocation. Part of the complex F(0) domain. A homomeric c-ring of probably 10 subunits is part of the complex rotary element. The protein is ATP synthase subunit 9, mitochondrial (atp9) of Emericella nidulans (strain FGSC A4 / ATCC 38163 / CBS 112.46 / NRRL 194 / M139) (Aspergillus nidulans).